A 193-amino-acid chain; its full sequence is uncharacterized protein (193 aa).

The tract at residues 1-144 (MEKKRTLSVN…NNNNNNEGTI (144 aa)) is disordered. A compositionally biased stretch (low complexity) spans 29–86 (NSLNNIENNECNNNNNNNNNNNNNNSNSNNLNNSNNNNINTSSNSINSSNSINNSIDN). The span at 103–118 (KMNSSQEFQSYLTPNK) shows a compositional bias: polar residues. The segment covering 119–140 (NNNNRNNNNRNNNNNNNNNNNN) has biased composition (low complexity). Residues 158 to 180 (YMIRPFLVGASASFGISIGMFYF) traverse the membrane as a helical segment.

Its subcellular location is the membrane. This is an uncharacterized protein from Dictyostelium discoideum (Social amoeba).